The sequence spans 375 residues: Chaperone protein DnaJ (375 aa).

The J domain maps to 5–69; sequence DYYEVLGVSK…QKRAQYDQFG (65 aa). The CR-type zinc-finger motif lies at 132-214; it reads GKETIIEIPR…CGGTGKVKKR (83 aa). Positions 145, 148, 162, 165, 188, 191, 202, and 205 each coordinate Zn(2+). CXXCXGXG motif repeat units follow at residues 145-152, 162-169, 188-195, and 202-209; these read CETCKGSG, CSHCGGSG, CHHCEGTG, and CSDCGGTG.

Belongs to the DnaJ family. As to quaternary structure, homodimer. Requires Zn(2+) as cofactor.

The protein localises to the cytoplasm. In terms of biological role, participates actively in the response to hyperosmotic and heat shock by preventing the aggregation of stress-denatured proteins and by disaggregating proteins, also in an autonomous, DnaK-independent fashion. Unfolded proteins bind initially to DnaJ; upon interaction with the DnaJ-bound protein, DnaK hydrolyzes its bound ATP, resulting in the formation of a stable complex. GrpE releases ADP from DnaK; ATP binding to DnaK triggers the release of the substrate protein, thus completing the reaction cycle. Several rounds of ATP-dependent interactions between DnaJ, DnaK and GrpE are required for fully efficient folding. Also involved, together with DnaK and GrpE, in the DNA replication of plasmids through activation of initiation proteins. In Bacillus velezensis (strain DSM 23117 / BGSC 10A6 / LMG 26770 / FZB42) (Bacillus amyloliquefaciens subsp. plantarum), this protein is Chaperone protein DnaJ.